The chain runs to 510 residues: Kynurenine 3-monooxygenase (510 aa).

This sequence belongs to the aromatic-ring hydroxylase family. KMO subfamily. Requires FAD as cofactor.

Its subcellular location is the mitochondrion outer membrane. It carries out the reaction L-kynurenine + NADPH + O2 + H(+) = 3-hydroxy-L-kynurenine + NADP(+) + H2O. The protein operates within cofactor biosynthesis; NAD(+) biosynthesis; quinolinate from L-kynurenine: step 1/3. Functionally, catalyzes the hydroxylation of L-kynurenine (L-Kyn) to form 3-hydroxy-L-kynurenine (L-3OHKyn). Required for synthesis of quinolinic acid. The protein is Kynurenine 3-monooxygenase (bna4) of Aspergillus oryzae (strain ATCC 42149 / RIB 40) (Yellow koji mold).